A 601-amino-acid chain; its full sequence is Probable HECT-type ubiquitin ligase-interacting protein creD (601 aa).

Disordered stretches follow at residues 374 to 397 and 455 to 489; these read EVDPSGYRTPGPGSGPGTPFGTLS and SADYFGPSSGSNSHSPASPELSRRPSDEGYHDHDH. Low complexity predominate over residues 461-473; sequence PSSGSNSHSPASP. A compositionally biased stretch (basic and acidic residues) spans 475 to 489; the sequence is LSRRPSDEGYHDHDH.

This sequence belongs to the arrestin family. In terms of assembly, interacts with hulA.

Its function is as follows. Component of the regulatory network controlling carbon source utilization through ubiquitination and deubiquitination involving creA, creB, creC, creD and acrB. May be involved in signaling by recognizing appropriately phosphorylated substrates via its arrestin domains and then recruit a HECT-type ubiquitin ligase such as hulA, leading to ubiquitination of the substrate, providing a link between ubiquitination and phosphorylation in protein regulation and stability. This is Probable HECT-type ubiquitin ligase-interacting protein creD (creD) from Neosartorya fischeri (strain ATCC 1020 / DSM 3700 / CBS 544.65 / FGSC A1164 / JCM 1740 / NRRL 181 / WB 181) (Aspergillus fischerianus).